We begin with the raw amino-acid sequence, 351 residues long: Phospho-N-acetylmuramoyl-pentapeptide-transferase (351 aa).

10 helical membrane passes run 17-37 (TAYATIFAFLLALIFGPFIIS), 61-83 (MGIPTMGGVLIFFCVLVSLFFWI), 88-105 (IYFLIVLFVMVSFACLGF), 130-150 (ILFSFISVVMLYYFGGEHVSI), 158-178 (SLKLDLGILYIPFGMFVLISA), 190-210 (GLAIGLSIVVIGALIIIAYLT), 230-250 (LVIFLGALLGGSFGFLWFNAY), 254-274 (IMMGDTGSLSIGAVLGMVALI), 279-299 (ILFAILAGVFVVETLSVIIQV), and 328-348 (QVVIRFWIIGLIFAILALSTI).

This sequence belongs to the glycosyltransferase 4 family. MraY subfamily. The cofactor is Mg(2+).

Its subcellular location is the cell inner membrane. The enzyme catalyses UDP-N-acetyl-alpha-D-muramoyl-L-alanyl-gamma-D-glutamyl-meso-2,6-diaminopimeloyl-D-alanyl-D-alanine + di-trans,octa-cis-undecaprenyl phosphate = di-trans,octa-cis-undecaprenyl diphospho-N-acetyl-alpha-D-muramoyl-L-alanyl-D-glutamyl-meso-2,6-diaminopimeloyl-D-alanyl-D-alanine + UMP. It functions in the pathway cell wall biogenesis; peptidoglycan biosynthesis. Its function is as follows. Catalyzes the initial step of the lipid cycle reactions in the biosynthesis of the cell wall peptidoglycan: transfers peptidoglycan precursor phospho-MurNAc-pentapeptide from UDP-MurNAc-pentapeptide onto the lipid carrier undecaprenyl phosphate, yielding undecaprenyl-pyrophosphoryl-MurNAc-pentapeptide, known as lipid I. The protein is Phospho-N-acetylmuramoyl-pentapeptide-transferase of Borrelia recurrentis (strain A1).